The chain runs to 155 residues: MSKITEQVEALIQPVLNDLNFELVDIEYVKEGKDHFLRISIDKEGGVDLNDCTIASEKISEVMDENDPIPEMYYLDVASPGAERPIKKEKDFYNAINQPIFVSLYAPIEGDKEWLGVLKSVNDESINMEVKEKAKTKEIEIPRNKIAKARHAVMI.

Belongs to the RimP family.

Its subcellular location is the cytoplasm. Its function is as follows. Required for maturation of 30S ribosomal subunits. The chain is Ribosome maturation factor RimP from Staphylococcus epidermidis (strain ATCC 35984 / DSM 28319 / BCRC 17069 / CCUG 31568 / BM 3577 / RP62A).